The primary structure comprises 186 residues: Dual-action ribosomal maturation protein DarP (186 aa).

Belongs to the DarP family.

It is found in the cytoplasm. Its function is as follows. Member of a network of 50S ribosomal subunit biogenesis factors which assembles along the 30S-50S interface, preventing incorrect 23S rRNA structures from forming. Promotes peptidyl transferase center (PTC) maturation. The protein is Dual-action ribosomal maturation protein DarP of Proteus mirabilis (strain HI4320).